Reading from the N-terminus, the 554-residue chain is MTPLIFVTGGVVSSLGKGIAAASLASILEARGLKVTMMKLDPYINVDPGTMSPFQHGEVYVTDDGAETDLDLGHYERYVRTRLSRKNSVTTGRIYENVIRKERRGDYLGATVQVIPHITDEIRRCIDEATAGFDVALIEIGGTVGDIESLPFLEAIRQVRTERGAEKAMFMHLTLVPYIAAAGELKTKPTQHSVKELRSIGIQPDVLLCRSEQAVPDSERRKIALFTNVSERAVISCPDIDVLYGMPLELLRQGLDELVIDQFKLRDKVAAADLSEWAAVVDAVKHPLDEVNIAVVGKYVDHQDAYKSVAEALRHGGLRQRTKVNLKWLEAQDLEGSDMSALQDIDGILVPGGFGDRGFEGKVQTSKFAREQKVPYFGICYGMQAAVVDYARHVADLDAANSTENDRQSPHPVIGLITEWRTATGEVEKRDEKSDLGGTMRLGLQEQRLKPGTLAREVYGKDVVAERHRHRYEFNNRYRTQLEDAGLVISGKSMDDTLVEVVELPRDTHPWFLACQAHPEFLSTPRDGHPLFIGFVRAAREKKAGGKLLKEARA.

The amidoligase domain stretch occupies residues M1–L265. A CTP-binding site is contributed by S13. S13 is a UTP binding site. Residues S14–I19 and D71 each bind ATP. Residues D71 and E139 each coordinate Mg(2+). CTP is bound by residues D146–E148, K186–Q191, and K222. UTP contacts are provided by residues K186–Q191 and K222. One can recognise a Glutamine amidotransferase type-1 domain in the interval N292 to G545. G353 contacts L-glutamine. The active-site Nucleophile; for glutamine hydrolysis is C380. L-glutamine contacts are provided by residues Y381–Q384, E404, and R471. Active-site residues include H518 and E520.

Belongs to the CTP synthase family. In terms of assembly, homotetramer.

The catalysed reaction is UTP + L-glutamine + ATP + H2O = CTP + L-glutamate + ADP + phosphate + 2 H(+). It carries out the reaction L-glutamine + H2O = L-glutamate + NH4(+). The enzyme catalyses UTP + NH4(+) + ATP = CTP + ADP + phosphate + 2 H(+). Its pathway is pyrimidine metabolism; CTP biosynthesis via de novo pathway; CTP from UDP: step 2/2. Its activity is regulated as follows. Allosterically activated by GTP, when glutamine is the substrate; GTP has no effect on the reaction when ammonia is the substrate. The allosteric effector GTP functions by stabilizing the protein conformation that binds the tetrahedral intermediate(s) formed during glutamine hydrolysis. Inhibited by the product CTP, via allosteric rather than competitive inhibition. Catalyzes the ATP-dependent amination of UTP to CTP with either L-glutamine or ammonia as the source of nitrogen. Regulates intracellular CTP levels through interactions with the four ribonucleotide triphosphates. This Xanthomonas axonopodis pv. citri (strain 306) protein is CTP synthase.